We begin with the raw amino-acid sequence, 655 residues long: Endoplasmic reticulum chaperone BiP (655 aa).

An N-terminal signal peptide occupies residues 1–19 (MMKFTVVAAALLLLGAVRA). A required for interaction with ELAPOR1 region spans residues 1 to 81 (MMKFTVVAAA…EGERLIGDAA (81 aa)). Position 37–40 (37–40 (GTTY)) interacts with ATP. Ser-87 carries the phosphoserine modification. Lys-97 is a binding site for ATP. The residue at position 126 (Lys-126) is an N6-acetyllysine. Residues 126–281 (KPYIQVDIGG…KKKTGKDVRK (156 aa)) are nucleotide-binding (NBD). Tyr-161 is subject to 3'-nitrotyrosine. Lys-214 is subject to N6-acetyllysine. ATP is bound at residue 228 to 230 (GGT). Lys-272 is modified (N6-acetyllysine). 294–301 (EKAKRALS) is an ATP binding site. Lys-327 carries the N6-acetyllysine modification. A Glycyl lysine isopeptide (Lys-Gly) (interchain with G-Cter in SUMO2) cross-link involves residue Lys-353. Lys-354 is modified (N6-acetyllysine; alternate). A Glycyl lysine isopeptide (Lys-Gly) (interchain with G-Cter in SUMO1); alternate cross-link involves residue Lys-354. 365–368 (GSTR) provides a ligand contact to ATP. The segment at 410–420 (QDTGDLVLLDV) is interdomain linker. The substrate-binding (SBD) stretch occupies residues 421–501 (CPLTLGIETV…PRGVPQIEVT (81 aa)). Position 448 is an N6-succinyllysine (Lys-448). Arg-493 is subject to Omega-N-methylarginine. Thr-519 is modified (O-AMP-threonine; alternate). Thr-519 bears the Phosphothreonine; alternate mark. An N6,N6,N6-trimethyllysine; by METTL21A; in vitro modification is found at Lys-586. Lys-586 is subject to N6,N6-dimethyllysine; alternate. Lys-586 carries the post-translational modification N6-methyllysine; alternate. Lys-592 bears the N6-methyllysine mark. A disordered region spans residues 632-655 (ISKLYGSGGPPPTGEEDTSEKDEL). Residues Thr-644 and Thr-649 each carry the phosphothreonine modification. Acidic residues predominate over residues 645–655 (GEEDTSEKDEL). At Ser-650 the chain carries Phosphoserine. The Prevents secretion from ER signature appears at 652–655 (KDEL).

Belongs to the heat shock protein 70 family. Monomer and homooligomer; homooligomerization via the interdomain linker inactivates the chaperone activity and acts as a storage of HSPA5/BiP molecules. Interacts with DNAJC1 (via J domain). Component of an EIF2 complex at least composed of CELF1/CUGBP1, CALR, CALR3, EIF2S1, EIF2S2, HSP90B1 and HSPA5. Part of a large chaperone multiprotein complex comprising DNAJB11, HSP90B1, HSPA5, HYOU, PDIA2, PDIA4, PDIA6, PPIB, SDF2L1, UGGT1 and very small amounts of ERP29, but not, or at very low levels, CALR nor CANX. Interacts with TMEM132A and TRIM21. May form a complex with ERLEC1, OS9, SEL1L and SYVN1. Interacts with DNAJC10. Interacts with DNAJB9/ERdj4; leading to recruit HSPA5/BiP to ERN1/IRE1. Interacts with ERN1/IRE1 (via luminal domain); the interaction takes place following interaction with DNAJB9/ERdj4 and leads to inactivate ERN1/IRE1, the interaction also competitively inhibits ERN1 interaction with MANF. Interacts directly with MANF (via SAP domain); the interaction inhibits ATP binding to HSPA5/BiP and subsequent nucleotide exchange. Interacts with ERN1 (via luminal domain); the interaction competitively inhibits ERN1 interaction with MANF. Interacts with EIF2AK3/PERK (via luminal domain); interaction leads to inactivate EIF2AK3/PERK. Interacts with MX1. Interacts with METTL23. Interacts with CEMIP; the interaction induces calcium leakage from the endoplasmic reticulum and cell migration. Interacts with PCSK4 form; the interaction takes place in the endoplasmic reticulum. Interacts with CIPC. Interacts with CCDC88B (via C-terminus); the interaction opposes ERN1-mediated JNK activation, protecting against apoptosis. Interacts with INPP5K; necessary for INPP5K localization at the endoplasmic reticulum. Interacts with MANF; the interaction is direct. Interacts with LOXL2; leading to activate the ERN1/IRE1-XBP1 pathway of the unfolded protein response. Interacts with CLU under stressed condition; interaction increases CLU protein stability; facilitates its retrotranslocation and redistribution to the mitochondria; cooperatively suppress stress-induced apoptosis by stabilizing mitochondrial membrane integrity. Interacts with CCDC47. Interacts with CLN3. Interacts with ELAPOR1; may regulate the function of HSPA5 in apoptosis and cell proliferation. Interacts with CASP7. Interacts with ILDR2; the interaction stabilizes ILDR2 expression. Interacts with ADAM7. In terms of processing, in unstressed cells, AMPylation at Thr-519 by FICD inactivates the chaperome activity: AMPylated form is locked in a relatively inert state and only weakly stimulated by J domain-containing proteins. In response to endoplasmic reticulum stress, de-AMPylation by the same protein, FICD, restores the chaperone activity. Expressed in sperm (at protein level).

The protein resides in the endoplasmic reticulum lumen. The protein localises to the melanosome. It localises to the cytoplasm. Its subcellular location is the cell surface. The catalysed reaction is ATP + H2O = ADP + phosphate + H(+). Its activity is regulated as follows. The chaperone activity is regulated by ATP-induced allosteric coupling of the nucleotide-binding (NBD) and substrate-binding (SBD) domains. In the ADP-bound and nucleotide-free (apo) states, the two domains have little interaction. In contrast, in the ATP-bound state the two domains are tightly coupled, which results in drastically accelerated kinetics in both binding and release of polypeptide substrates. J domain-containing co-chaperones (DNAJB9/ERdj4 or DNAJC10/ERdj5) stimulate the ATPase activity and are required for efficient substrate recognition by HSPA5/BiP. Homooligomerization inactivates participating HSPA5/BiP protomers and probably act as reservoirs to store HSPA5/BiP molecules when they are not needed by the cell. Endoplasmic reticulum chaperone that plays a key role in protein folding and quality control in the endoplasmic reticulum lumen. Involved in the correct folding of proteins and degradation of misfolded proteins via its interaction with DNAJC10/ERdj5, probably to facilitate the release of DNAJC10/ERdj5 from its substrate. Acts as a key repressor of the EIF2AK3/PERK and ERN1/IRE1-mediated unfolded protein response (UPR). In the unstressed endoplasmic reticulum, recruited by DNAJB9/ERdj4 to the luminal region of ERN1/IRE1, leading to disrupt the dimerization of ERN1/IRE1, thereby inactivating ERN1/IRE1. Also binds and inactivates EIF2AK3/PERK in unstressed cells. Accumulation of misfolded protein in the endoplasmic reticulum causes release of HSPA5/BiP from ERN1/IRE1 and EIF2AK3/PERK, allowing their homodimerization and subsequent activation. Plays an auxiliary role in post-translational transport of small presecretory proteins across endoplasmic reticulum (ER). May function as an allosteric modulator for SEC61 channel-forming translocon complex, likely cooperating with SEC62 to enable the productive insertion of these precursors into SEC61 channel. Appears to specifically regulate translocation of precursors having inhibitory residues in their mature region that weaken channel gating. May also play a role in apoptosis and cell proliferation. This Mus musculus (Mouse) protein is Endoplasmic reticulum chaperone BiP.